The chain runs to 352 residues: Phenylalanine--tRNA ligase alpha subunit (352 aa).

Glu258 is a binding site for Mg(2+).

Belongs to the class-II aminoacyl-tRNA synthetase family. Phe-tRNA synthetase alpha subunit type 1 subfamily. In terms of assembly, tetramer of two alpha and two beta subunits. It depends on Mg(2+) as a cofactor.

It localises to the cytoplasm. It catalyses the reaction tRNA(Phe) + L-phenylalanine + ATP = L-phenylalanyl-tRNA(Phe) + AMP + diphosphate + H(+). The polypeptide is Phenylalanine--tRNA ligase alpha subunit (Staphylococcus aureus (strain NCTC 8325 / PS 47)).